Here is a 369-residue protein sequence, read N- to C-terminus: Bi-functional coumaroyl CoA and feruloyl CoA ortho-hydroxylase Diox1 (369 aa).

In terms of domain architecture, Fe2OG dioxygenase spans 209–319; the sequence is IREPMLVGSR…RISVPLFVNP (111 aa). A 2-oxoglutarate-binding site is contributed by Y225. Fe cation is bound by residues H240, D242, and H300. Positions 310 and 312 each coordinate 2-oxoglutarate.

The protein belongs to the iron/ascorbate-dependent oxidoreductase family. The cofactor is L-ascorbate. Requires Fe(2+) as cofactor.

The enzyme catalyses (E)-4-coumaroyl-CoA + 2-oxoglutarate + O2 = (E)-2,4-dihydroxycinnamoyl-CoA + succinate + CO2. It catalyses the reaction (E)-feruloyl-CoA + 2-oxoglutarate + O2 = (E)-6-hydroxyferuloyl-CoA + succinate + CO2. It participates in phenylpropanoid metabolism. In terms of biological role, 2-oxoglutarate (OG)- and Fe(II)-dependent dioxygenase (2OGD) involved in scopoletin and umbelliferone biosynthesis. Converts feruloyl CoA into 6'-hydroxyferuloyl CoA, and p-coumaroyl CoA into 2,4-dihydroxycinnamoyl-CoA. The chain is Bi-functional coumaroyl CoA and feruloyl CoA ortho-hydroxylase Diox1 from Ruta graveolens (Common rue).